Consider the following 451-residue polypeptide: UDP-N-acetylmuramoylalanine--D-glutamate ligase (451 aa).

118-124 is an ATP binding site; sequence GSNGKTT.

It belongs to the MurCDEF family.

Its subcellular location is the cytoplasm. It carries out the reaction UDP-N-acetyl-alpha-D-muramoyl-L-alanine + D-glutamate + ATP = UDP-N-acetyl-alpha-D-muramoyl-L-alanyl-D-glutamate + ADP + phosphate + H(+). It functions in the pathway cell wall biogenesis; peptidoglycan biosynthesis. Its function is as follows. Cell wall formation. Catalyzes the addition of glutamate to the nucleotide precursor UDP-N-acetylmuramoyl-L-alanine (UMA). The protein is UDP-N-acetylmuramoylalanine--D-glutamate ligase of Shouchella clausii (strain KSM-K16) (Alkalihalobacillus clausii).